The following is a 273-amino-acid chain: Transmembrane protein 202 (273 aa).

The next 4 helical transmembrane spans lie at 53–75 (HIYI…IAMS), 121–141 (FFLI…SSWI), 155–175 (VSML…LFVA), and 189–209 (LLWT…AGII). The tract at residues 242–273 (TTVSPAKDEGPRSEMESLSVREKNLPKSGLWW) is disordered. The segment covering 247-266 (AKDEGPRSEMESLSVREKNL) has biased composition (basic and acidic residues).

The protein localises to the membrane. The protein is Transmembrane protein 202 (TMEM202) of Homo sapiens (Human).